The chain runs to 212 residues: Thiamine-phosphate synthase (212 aa).

Residues 39–43 (QLRIK) and N71 each bind 4-amino-2-methyl-5-(diphosphooxymethyl)pyrimidine. Mg(2+)-binding residues include D72 and D91. A 4-amino-2-methyl-5-(diphosphooxymethyl)pyrimidine-binding site is contributed by S110. Residue 136-138 (TQT) coordinates 2-[(2R,5Z)-2-carboxy-4-methylthiazol-5(2H)-ylidene]ethyl phosphate. Position 139 (K139) interacts with 4-amino-2-methyl-5-(diphosphooxymethyl)pyrimidine. 2-[(2R,5Z)-2-carboxy-4-methylthiazol-5(2H)-ylidene]ethyl phosphate-binding positions include G168 and 188 to 189 (VS).

It belongs to the thiamine-phosphate synthase family. Requires Mg(2+) as cofactor.

It catalyses the reaction 2-[(2R,5Z)-2-carboxy-4-methylthiazol-5(2H)-ylidene]ethyl phosphate + 4-amino-2-methyl-5-(diphosphooxymethyl)pyrimidine + 2 H(+) = thiamine phosphate + CO2 + diphosphate. It carries out the reaction 2-(2-carboxy-4-methylthiazol-5-yl)ethyl phosphate + 4-amino-2-methyl-5-(diphosphooxymethyl)pyrimidine + 2 H(+) = thiamine phosphate + CO2 + diphosphate. The enzyme catalyses 4-methyl-5-(2-phosphooxyethyl)-thiazole + 4-amino-2-methyl-5-(diphosphooxymethyl)pyrimidine + H(+) = thiamine phosphate + diphosphate. It participates in cofactor biosynthesis; thiamine diphosphate biosynthesis; thiamine phosphate from 4-amino-2-methyl-5-diphosphomethylpyrimidine and 4-methyl-5-(2-phosphoethyl)-thiazole: step 1/1. Condenses 4-methyl-5-(beta-hydroxyethyl)thiazole monophosphate (THZ-P) and 2-methyl-4-amino-5-hydroxymethyl pyrimidine pyrophosphate (HMP-PP) to form thiamine monophosphate (TMP). In Serratia proteamaculans (strain 568), this protein is Thiamine-phosphate synthase.